A 329-amino-acid polypeptide reads, in one-letter code: MLKPMYYEFFFIFPKERELFESFLLDTTHLALEESSLENLKAFDDKETIEFISQSSWHYFATHDPLKEHLKEKPQHLKNFVILRSQKDLNNSLILALEAFCLNLKQNLQSEFDFFYLSRNLASKDWLEAYKQAILPVQCAKFYIHPSWHQKPSHISTDDCIMIDPALAFGSGHHESTSMCLELLSDLDLKRKNALDVGCGSGILSIALKKQGVSALVACDTDSLAVEETLKNFSLNQIPLLAQDKVIYGSTQKIEGRFDIIVANLVADVVKSLYSEFVRLCNHTLILSGILETHLNSVLQIYYNGFEILEQRQRNEWVALKLLKKQPIN.

The S-adenosyl-L-methionine site is built by threonine 177, glycine 198, aspartate 220, and asparagine 264.

The protein belongs to the methyltransferase superfamily. PrmA family.

Its subcellular location is the cytoplasm. It catalyses the reaction L-lysyl-[protein] + 3 S-adenosyl-L-methionine = N(6),N(6),N(6)-trimethyl-L-lysyl-[protein] + 3 S-adenosyl-L-homocysteine + 3 H(+). In terms of biological role, methylates ribosomal protein L11. The sequence is that of Ribosomal protein L11 methyltransferase from Helicobacter pylori (strain HPAG1).